Here is a 628-residue protein sequence, read N- to C-terminus: Vacuolar-sorting receptor 4 (628 aa).

An N-terminal signal peptide occupies residues 1-24 (MKQLLCYLPWLLLLSLVVSPFNEA). At 25–569 (RFVVEKNSLS…SKTGSQVKSA (545 aa)) the chain is on the lumenal side. The region spanning 56-168 (QYGGSMAGTV…GFGEKLKKAI (113 aa)) is the PA domain. Asparagine 148, asparagine 294, and asparagine 434 each carry an N-linked (GlcNAc...) asparagine glycan. EGF-like domains lie at 416–466 (ETNE…SHCE) and 469–516 (GPGR…KKCE). 7 disulfides stabilise this stretch: cysteine 420–cysteine 438, cysteine 427–cysteine 447, cysteine 449–cysteine 465, cysteine 473–cysteine 493, cysteine 480–cysteine 501, cysteine 503–cysteine 515, and cysteine 545–cysteine 558. The EGF-like 3; calcium-binding domain maps to 517–559 (DINECKEKKACQCPECSCKNTWGSYECSCSGDLLYMRDHDTCI). The chain crosses the membrane as a helical span at residues 570-590 (WAAVWLIMLSLGLAAAGAYLV). Residues 591-628 (YKYRLRQYMDSEIRAIMAQYMPLDSQPEVPNHTNDERA) lie on the Cytoplasmic side of the membrane. Positions 610 to 613 (YMPL) match the Tyrosine-based internalization motif motif.

It belongs to the VSR (BP-80) family. In terms of tissue distribution, expressed at low levels in seeds, seedlings, roots, stems, leaves, flowers and siliques.

The protein resides in the membrane. The protein localises to the golgi apparatus membrane. Its subcellular location is the cytoplasmic vesicle. It is found in the clathrin-coated vesicle membrane. It localises to the prevacuolar compartment membrane. Vacuolar-sorting receptor (VSR) involved in clathrin-coated vesicles sorting from Golgi apparatus to vacuoles. The polypeptide is Vacuolar-sorting receptor 4 (VSR4) (Arabidopsis thaliana (Mouse-ear cress)).